Consider the following 75-residue polypeptide: Conotoxin VnMSGL-0111 (75 aa).

A signal peptide spans 1–20; it reads MSGLEIMVLTLLLLVSMATS. The propeptide occupies 21-44; it reads HQDGGEKQATQRDAINVRRRSITR. Cystine bridges form between C48/C60, C52/C69, and C59/C73.

Belongs to the conotoxin O3 superfamily. As to expression, expressed by the venom duct.

The protein localises to the secreted. This is Conotoxin VnMSGL-0111 from Conus ventricosus (Mediterranean cone).